Reading from the N-terminus, the 169-residue chain is Large ribosomal subunit protein uL10 (169 aa).

It belongs to the universal ribosomal protein uL10 family. As to quaternary structure, part of the ribosomal stalk of the 50S ribosomal subunit. The N-terminus interacts with L11 and the large rRNA to form the base of the stalk. The C-terminus forms an elongated spine to which L12 dimers bind in a sequential fashion forming a multimeric L10(L12)X complex.

Its function is as follows. Forms part of the ribosomal stalk, playing a central role in the interaction of the ribosome with GTP-bound translation factors. The sequence is that of Large ribosomal subunit protein uL10 from Orientia tsutsugamushi (strain Ikeda) (Rickettsia tsutsugamushi).